Consider the following 267-residue polypeptide: Undecaprenyl-diphosphatase 1 (267 aa).

8 helical membrane-spanning segments follow: residues 6–26 (VLVVALIQGLGEVLPFGAAGL), 41–60 (AALSVAAHAGILLALMIYFW), 83–103 (HLLLHVLAGTIPAAIVGWLVL), 109–129 (LVGQSGAAIILILGGVLLWGC), 142–162 (MSWVGAAGLGALQILSLVPGV), 185–205 (FSMLLAMPLILGHGVKTFWGL), 217–237 (LLMAMATAGLAALIGLAGMMA), and 244–264 (FVPFAILRIGFGIAVLGLVYF).

It belongs to the UppP family.

The protein resides in the cell inner membrane. The enzyme catalyses di-trans,octa-cis-undecaprenyl diphosphate + H2O = di-trans,octa-cis-undecaprenyl phosphate + phosphate + H(+). Functionally, catalyzes the dephosphorylation of undecaprenyl diphosphate (UPP). Confers resistance to bacitracin. In Paramagnetospirillum magneticum (strain ATCC 700264 / AMB-1) (Magnetospirillum magneticum), this protein is Undecaprenyl-diphosphatase 1.